The following is a 283-amino-acid chain: Phosphatidylserine decarboxylase proenzyme (283 aa).

Active-site charge relay system; for autoendoproteolytic cleavage activity residues include Asp89, His146, and Ser249. The active-site Schiff-base intermediate with substrate; via pyruvic acid; for decarboxylase activity is Ser249. Ser249 bears the Pyruvic acid (Ser); by autocatalysis mark.

The protein belongs to the phosphatidylserine decarboxylase family. PSD-B subfamily. Prokaryotic type I sub-subfamily. In terms of assembly, heterodimer of a large membrane-associated beta subunit and a small pyruvoyl-containing alpha subunit. Pyruvate serves as cofactor. Is synthesized initially as an inactive proenzyme. Formation of the active enzyme involves a self-maturation process in which the active site pyruvoyl group is generated from an internal serine residue via an autocatalytic post-translational modification. Two non-identical subunits are generated from the proenzyme in this reaction, and the pyruvate is formed at the N-terminus of the alpha chain, which is derived from the carboxyl end of the proenzyme. The autoendoproteolytic cleavage occurs by a canonical serine protease mechanism, in which the side chain hydroxyl group of the serine supplies its oxygen atom to form the C-terminus of the beta chain, while the remainder of the serine residue undergoes an oxidative deamination to produce ammonia and the pyruvoyl prosthetic group on the alpha chain. During this reaction, the Ser that is part of the protease active site of the proenzyme becomes the pyruvoyl prosthetic group, which constitutes an essential element of the active site of the mature decarboxylase.

The protein localises to the cell membrane. It catalyses the reaction a 1,2-diacyl-sn-glycero-3-phospho-L-serine + H(+) = a 1,2-diacyl-sn-glycero-3-phosphoethanolamine + CO2. It participates in phospholipid metabolism; phosphatidylethanolamine biosynthesis; phosphatidylethanolamine from CDP-diacylglycerol: step 2/2. Catalyzes the formation of phosphatidylethanolamine (PtdEtn) from phosphatidylserine (PtdSer). This is Phosphatidylserine decarboxylase proenzyme from Legionella pneumophila subsp. pneumophila (strain Philadelphia 1 / ATCC 33152 / DSM 7513).